We begin with the raw amino-acid sequence, 320 residues long: Aristolochene synthase (320 aa).

Over residues 1–14 (MKKPNGTNGASSSL) the composition is skewed to polar residues. Positions 1 to 20 (MKKPNGTNGASSSLEPPPST) are disordered. The Mg(2+) site is built by D90, N219, S223, and E227. Residues R314 and Y315 each contribute to the (2E,6E)-farnesyl diphosphate site.

The protein belongs to the terpene synthase family. Homodimer. Requires Mg(2+) as cofactor.

It carries out the reaction (2E,6E)-farnesyl diphosphate = (+)-aristolochene + diphosphate. It functions in the pathway sesquiterpene biosynthesis; aristolochene biosynthesis; aristolochene from farnesyl diphosphate: step 1/1. Its function is as follows. Catalyzes the cyclization of trans,trans-farnesyl diphosphate (FPP) to the bicyclic sesquiterpene aristolochene. Produces germacrene A as an enzyme-bound intermediate that is not released by the enzyme, but is further cyclized to produce aristolochene. Aristolochene is the likely parent compound for a number of sesquiterpenoid toxins produced by filamentous fungi. The chain is Aristolochene synthase (Ari1) from Aspergillus terreus.